The sequence spans 604 residues: Lipoprotein LpqB (604 aa).

An N-terminal signal peptide occupies residues 1–27; sequence MTMRAARLSGSTGLTAALVAVLLVLTG. Residue Cys-28 is the site of N-palmitoyl cysteine attachment. Cys-28 carries the S-diacylglycerol cysteine lipid modification. Residues 35 to 60 are disordered; sequence SAPQALGTIDREPTSEGPTPPIAGRD.

Belongs to the LpqB lipoprotein family.

The protein localises to the cell membrane. The chain is Lipoprotein LpqB from Nocardia farcinica (strain IFM 10152).